Here is a 92-residue protein sequence, read N- to C-terminus: Trp operon repressor homolog (92 aa).

The DNA-binding element occupies 56 to 79; sequence QREVASKLGVSITKITRGAANLQD.

Belongs to the TrpR family. In terms of assembly, homodimer.

The protein localises to the cytoplasm. In terms of biological role, this protein is an aporepressor. When complexed with L-tryptophan it binds the operator region of the trp operon and prevents the initiation of transcription. The chain is Trp operon repressor homolog from Xylella fastidiosa (strain M23).